A 44-amino-acid polypeptide reads, in one-letter code: Protein PsbN (44 aa).

A helical transmembrane segment spans residues 6-26 (FFFTIFLWFFLLSITAYSIYV).

It belongs to the PsbN family.

It localises to the plastid. Its subcellular location is the chloroplast thylakoid membrane. In terms of biological role, may play a role in photosystem I and II biogenesis. This chain is Protein PsbN, found in Stigeoclonium helveticum (Green alga).